The chain runs to 340 residues: DNA polymerase III subunit delta' (340 aa).

As to quaternary structure, the DNA polymerase holoenzyme is a complex that contains 10 different types of subunits. These subunits are organized into 3 functionally essential subassemblies: the pol III core, the beta sliding clamp processivity factor and the clamp-loading complex. The pol III core (subunits alpha,epsilon and theta) contains the polymerase and the 3'-5' exonuclease proofreading activities. The polymerase is tethered to the template via the sliding clamp processivity factor. The clamp-loading complex assembles the beta processivity factor onto the primer template and plays a central role in the organization and communication at the replication fork. This complex contains delta, delta', psi and chi, and copies of either or both of two different DnaX proteins, gamma and tau. The composition of the holoenzyme is, therefore: (alpha,epsilon,theta)[2]-(gamma/tau)[3]-delta,delta', psi,chi-beta[4].

It catalyses the reaction DNA(n) + a 2'-deoxyribonucleoside 5'-triphosphate = DNA(n+1) + diphosphate. In terms of biological role, DNA polymerase III is a complex, multichain enzyme responsible for most of the replicative synthesis in bacteria. This DNA polymerase also exhibits 3' to 5' exonuclease activity. In Yersinia pestis, this protein is DNA polymerase III subunit delta' (holB).